A 223-amino-acid chain; its full sequence is Class E basic helix-loop-helix protein 23 (223 aa).

Positions Pro-32–Pro-93 are disordered. A bHLH domain is found at Ser-98–Gln-152.

As to expression, expressed in brain and retina.

Its subcellular location is the nucleus. May function as transcriptional repressor. May modulate the expression of genes required for the differentiation and/or maintenance of pancreatic and neuronal cell types. May be important for rod bipolar cell maturation. The polypeptide is Class E basic helix-loop-helix protein 23 (Bhlhe23) (Mus musculus (Mouse)).